The chain runs to 246 residues: MAGHSKWANIKHRKAAQDAKRGKIFTKLIREITTSARLGDADPANNPRLRAAVAAALTGNMTRDTINRAIQRGAGGGDGEQLETIVYEGYGPAGSAVMVECLTDNRNRTVAEVRHAFSKCGGNLGTDGSVAYLFSKKGLLTFVGVDEDALMDAALEAGADDVVTEEDGSIEVYTTPNDFGTVLDGLEAAGFKPQSAEVTMIPSTEAELDAETAPKLMRLIDMLEDLDDVQEVYHNGSISDEVAATL.

The protein belongs to the TACO1 family.

It is found in the cytoplasm. The chain is Probable transcriptional regulatory protein AHA_1522 from Aeromonas hydrophila subsp. hydrophila (strain ATCC 7966 / DSM 30187 / BCRC 13018 / CCUG 14551 / JCM 1027 / KCTC 2358 / NCIMB 9240 / NCTC 8049).